Here is a 191-residue protein sequence, read N- to C-terminus: Potassium-transporting ATPase KdpC subunit (191 aa).

Residues 6–26 (PALVLFILLTLLTGGVYPLLT) form a helical membrane-spanning segment.

This sequence belongs to the KdpC family. The system is composed of three essential subunits: KdpA, KdpB and KdpC.

The protein localises to the cell inner membrane. Functionally, part of the high-affinity ATP-driven potassium transport (or Kdp) system, which catalyzes the hydrolysis of ATP coupled with the electrogenic transport of potassium into the cytoplasm. This subunit acts as a catalytic chaperone that increases the ATP-binding affinity of the ATP-hydrolyzing subunit KdpB by the formation of a transient KdpB/KdpC/ATP ternary complex. The chain is Potassium-transporting ATPase KdpC subunit from Klebsiella pneumoniae subsp. pneumoniae (strain ATCC 700721 / MGH 78578).